Reading from the N-terminus, the 291-residue chain is 4-diphosphocytidyl-2-C-methyl-D-erythritol kinase (291 aa).

Lysine 10 is an active-site residue. 99–109 is a binding site for ATP; it reads PMGGGLGGGSS. Aspartate 141 is an active-site residue.

The protein belongs to the GHMP kinase family. IspE subfamily. As to quaternary structure, homodimer.

It carries out the reaction 4-CDP-2-C-methyl-D-erythritol + ATP = 4-CDP-2-C-methyl-D-erythritol 2-phosphate + ADP + H(+). The protein operates within isoprenoid biosynthesis; isopentenyl diphosphate biosynthesis via DXP pathway; isopentenyl diphosphate from 1-deoxy-D-xylulose 5-phosphate: step 3/6. Its function is as follows. Catalyzes the phosphorylation of the position 2 hydroxy group of 4-diphosphocytidyl-2C-methyl-D-erythritol. This is 4-diphosphocytidyl-2-C-methyl-D-erythritol kinase from Proteus mirabilis (strain HI4320).